Here is a 350-residue protein sequence, read N- to C-terminus: GDSL esterase/lipase At2g42990 (350 aa).

A signal peptide spans 1 to 24; it reads MATHYLSPSILCIILTTLVSIAGA. The active-site Nucleophile is the S35. N-linked (GlcNAc...) asparagine glycans are attached at residues N98, N117, and N141. Catalysis depends on residues D325 and H328.

The protein belongs to the 'GDSL' lipolytic enzyme family.

The protein localises to the secreted. This Arabidopsis thaliana (Mouse-ear cress) protein is GDSL esterase/lipase At2g42990.